We begin with the raw amino-acid sequence, 925 residues long: Eukaryotic translation initiation factor 3 subunit A (925 aa).

Positions 108–127 (QAQTDAKEESNKDQAEEDLE) are disordered. Basic and acidic residues predominate over residues 112 to 121 (DAKEESNKDQ). The PCI domain occupies 324 to 498 (FKFYSSQFVL…DTVSFAQDPF (175 aa)). Disordered stretches follow at residues 509-544 (PESSTSDEAKNSESEEETSQETHADEEQNEQVFTRN) and 839-925 (KEAL…AGRG). Coiled-coil stretches lie at residues 534-666 (EEQN…MKKL) and 785-885 (SVIA…SSRS). The span at 839–880 (KEALAKEEELAKRRAERERINKERDEIARKQREIEELLEKKN) shows a compositional bias: basic and acidic residues. A compositionally biased stretch (basic residues) spans 916 to 925 (RLKRMNAGRG).

This sequence belongs to the eIF-3 subunit A family. Component of the eukaryotic translation initiation factor 3 (eIF-3) complex.

It localises to the cytoplasm. Functionally, RNA-binding component of the eukaryotic translation initiation factor 3 (eIF-3) complex, which is involved in protein synthesis of a specialized repertoire of mRNAs and, together with other initiation factors, stimulates binding of mRNA and methionyl-tRNAi to the 40S ribosome. The eIF-3 complex specifically targets and initiates translation of a subset of mRNAs involved in cell proliferation. In Kluyveromyces lactis (strain ATCC 8585 / CBS 2359 / DSM 70799 / NBRC 1267 / NRRL Y-1140 / WM37) (Yeast), this protein is Eukaryotic translation initiation factor 3 subunit A.